Consider the following 342-residue polypeptide: tRNA (guanine(26)-N(2))-dimethyltransferase (342 aa).

Positions 1–336 constitute a Trm1 methyltransferase domain; that stretch reads MRITEGSAVI…CPYAEVSEIL (336 aa). S-adenosyl-L-methionine is bound by residues R35, R60, and E76.

This sequence belongs to the class I-like SAM-binding methyltransferase superfamily. Trm1 family.

The catalysed reaction is guanosine(26) in tRNA + 2 S-adenosyl-L-methionine = N(2)-dimethylguanosine(26) in tRNA + 2 S-adenosyl-L-homocysteine + 2 H(+). Its function is as follows. Dimethylates a single guanine residue at position 26 of a number of tRNAs using S-adenosyl-L-methionine as donor of the methyl groups. In Thermoplasma volcanium (strain ATCC 51530 / DSM 4299 / JCM 9571 / NBRC 15438 / GSS1), this protein is tRNA (guanine(26)-N(2))-dimethyltransferase.